Here is a 395-residue protein sequence, read N- to C-terminus: Putative 8-amino-7-oxononanoate synthase (395 aa).

A substrate-binding site is contributed by Arg-23. A pyridoxal 5'-phosphate-binding site is contributed by 110–111 (GF). His-135 is a substrate binding site. Pyridoxal 5'-phosphate is bound by residues Ser-182, 207–210 (DEAH), and 239–242 (TFSK). Position 242 is an N6-(pyridoxal phosphate)lysine (Lys-242). Substrate is bound at residue Thr-356.

The protein belongs to the class-II pyridoxal-phosphate-dependent aminotransferase family. BioF subfamily. In terms of assembly, homodimer. It depends on pyridoxal 5'-phosphate as a cofactor.

The catalysed reaction is 6-carboxyhexanoyl-[ACP] + L-alanine + H(+) = (8S)-8-amino-7-oxononanoate + holo-[ACP] + CO2. The protein operates within cofactor biosynthesis; biotin biosynthesis. In terms of biological role, catalyzes the decarboxylative condensation of pimeloyl-[acyl-carrier protein] and L-alanine to produce 8-amino-7-oxononanoate (AON), [acyl-carrier protein], and carbon dioxide. The sequence is that of Putative 8-amino-7-oxononanoate synthase (bioF) from Bacillus anthracis.